A 435-amino-acid chain; its full sequence is Adenylosuccinate synthetase (435 aa).

Residues 11-17 (GDEGKGK) and 39-41 (GHT) contribute to the GTP site. The active-site Proton acceptor is D12. Mg(2+) contacts are provided by D12 and G39. IMP contacts are provided by residues 12–15 (DEGK), 37–40 (NAGH), T134, R148, N230, T245, and R309. The active-site Proton donor is H40. Residue 305-311 (VTTGRKR) coordinates substrate. GTP-binding positions include R311, 337 to 339 (KLD), and 419 to 421 (GTG).

It belongs to the adenylosuccinate synthetase family. Homodimer. Mg(2+) serves as cofactor.

The protein localises to the cytoplasm. The catalysed reaction is IMP + L-aspartate + GTP = N(6)-(1,2-dicarboxyethyl)-AMP + GDP + phosphate + 2 H(+). Its pathway is purine metabolism; AMP biosynthesis via de novo pathway; AMP from IMP: step 1/2. Functionally, plays an important role in the de novo pathway and in the salvage pathway of purine nucleotide biosynthesis. Catalyzes the first committed step in the biosynthesis of AMP from IMP. The sequence is that of Adenylosuccinate synthetase from Zygosaccharomyces rouxii (strain ATCC 2623 / CBS 732 / NBRC 1130 / NCYC 568 / NRRL Y-229).